The chain runs to 702 residues: Ribosomal RNA large subunit methyltransferase K/L (702 aa).

The THUMP domain maps to 43–154 (LVYQSLMWSR…KETASIALDL (112 aa)).

The protein belongs to the methyltransferase superfamily. RlmKL family.

It is found in the cytoplasm. The catalysed reaction is guanosine(2445) in 23S rRNA + S-adenosyl-L-methionine = N(2)-methylguanosine(2445) in 23S rRNA + S-adenosyl-L-homocysteine + H(+). It catalyses the reaction guanosine(2069) in 23S rRNA + S-adenosyl-L-methionine = N(2)-methylguanosine(2069) in 23S rRNA + S-adenosyl-L-homocysteine + H(+). In terms of biological role, specifically methylates the guanine in position 2445 (m2G2445) and the guanine in position 2069 (m7G2069) of 23S rRNA. This Shigella dysenteriae serotype 1 (strain Sd197) protein is Ribosomal RNA large subunit methyltransferase K/L.